A 124-amino-acid polypeptide reads, in one-letter code: Prefoldin subunit beta (124 aa).

It belongs to the prefoldin subunit beta family. In terms of assembly, heterohexamer of two alpha and four beta subunits.

It localises to the cytoplasm. Functionally, molecular chaperone capable of stabilizing a range of proteins. Seems to fulfill an ATP-independent, HSP70-like function in archaeal de novo protein folding. The polypeptide is Prefoldin subunit beta (pfdB) (Thermoplasma volcanium (strain ATCC 51530 / DSM 4299 / JCM 9571 / NBRC 15438 / GSS1)).